Here is a 117-residue protein sequence, read N- to C-terminus: Large ribosomal subunit protein uL18 (117 aa).

It belongs to the universal ribosomal protein uL18 family. Part of the 50S ribosomal subunit; part of the 5S rRNA/L5/L18/L25 subcomplex. Contacts the 5S and 23S rRNAs.

In terms of biological role, this is one of the proteins that bind and probably mediate the attachment of the 5S RNA into the large ribosomal subunit, where it forms part of the central protuberance. This Mannheimia succiniciproducens (strain KCTC 0769BP / MBEL55E) protein is Large ribosomal subunit protein uL18.